We begin with the raw amino-acid sequence, 129 residues long: Cytochrome c-type protein SHP (129 aa).

The N-terminal stretch at 1–17 is a signal peptide; the sequence is MTRFLILSAVLAGPALA. Cysteine 60, cysteine 63, and histidine 64 together coordinate heme c. The cysteines at positions 106 and 114 are disulfide-linked.

Binds 1 heme c group covalently per subunit.

High-spin cytochrome. Transiently bind oxygen during autoxidation, which occurs with a half-life of 3 minutes with a 4-fold excess of O(2). Also binds carbon monoxide, azide and cyanide. This is Cytochrome c-type protein SHP (shp) from Cereibacter sphaeroides (strain ATCC 17023 / DSM 158 / JCM 6121 / CCUG 31486 / LMG 2827 / NBRC 12203 / NCIMB 8253 / ATH 2.4.1.) (Rhodobacter sphaeroides).